The primary structure comprises 583 residues: 2-succinyl-5-enolpyruvyl-6-hydroxy-3-cyclohexene-1-carboxylate synthase (583 aa).

Belongs to the TPP enzyme family. MenD subfamily. As to quaternary structure, homodimer. The cofactor is Mg(2+). It depends on Mn(2+) as a cofactor. Thiamine diphosphate serves as cofactor.

It catalyses the reaction isochorismate + 2-oxoglutarate + H(+) = 5-enolpyruvoyl-6-hydroxy-2-succinyl-cyclohex-3-ene-1-carboxylate + CO2. It participates in quinol/quinone metabolism; 1,4-dihydroxy-2-naphthoate biosynthesis; 1,4-dihydroxy-2-naphthoate from chorismate: step 2/7. Its pathway is quinol/quinone metabolism; menaquinone biosynthesis. Catalyzes the thiamine diphosphate-dependent decarboxylation of 2-oxoglutarate and the subsequent addition of the resulting succinic semialdehyde-thiamine pyrophosphate anion to isochorismate to yield 2-succinyl-5-enolpyruvyl-6-hydroxy-3-cyclohexene-1-carboxylate (SEPHCHC). In Roseiflexus sp. (strain RS-1), this protein is 2-succinyl-5-enolpyruvyl-6-hydroxy-3-cyclohexene-1-carboxylate synthase.